Here is a 217-residue protein sequence, read N- to C-terminus: Ribosomal RNA large subunit methyltransferase E (217 aa).

Residues G64, W66, D92, D108, and D133 each contribute to the S-adenosyl-L-methionine site. Residue K173 is the Proton acceptor of the active site.

It belongs to the class I-like SAM-binding methyltransferase superfamily. RNA methyltransferase RlmE family.

It is found in the cytoplasm. The catalysed reaction is uridine(2552) in 23S rRNA + S-adenosyl-L-methionine = 2'-O-methyluridine(2552) in 23S rRNA + S-adenosyl-L-homocysteine + H(+). Its function is as follows. Specifically methylates the uridine in position 2552 of 23S rRNA at the 2'-O position of the ribose in the fully assembled 50S ribosomal subunit. The sequence is that of Ribosomal RNA large subunit methyltransferase E from Delftia acidovorans (strain DSM 14801 / SPH-1).